The primary structure comprises 447 residues: Glutamyl-tRNA reductase (447 aa).

Substrate contacts are provided by residues 45–48 (TCNR), Ser111, 116–118 (ETE), and Gln122. Cys46 (nucleophile) is an active-site residue. NADP(+) is bound at residue 191-196 (GTGKYA).

This sequence belongs to the glutamyl-tRNA reductase family. In terms of assembly, homodimer.

It catalyses the reaction (S)-4-amino-5-oxopentanoate + tRNA(Glu) + NADP(+) = L-glutamyl-tRNA(Glu) + NADPH + H(+). The protein operates within porphyrin-containing compound metabolism; protoporphyrin-IX biosynthesis; 5-aminolevulinate from L-glutamyl-tRNA(Glu): step 1/2. Catalyzes the NADPH-dependent reduction of glutamyl-tRNA(Glu) to glutamate 1-semialdehyde (GSA). The polypeptide is Glutamyl-tRNA reductase (Tropheryma whipplei (strain Twist) (Whipple's bacillus)).